We begin with the raw amino-acid sequence, 250 residues long: Probable transcriptional regulatory protein Plut_1643 (250 aa).

The protein belongs to the TACO1 family.

It localises to the cytoplasm. This Chlorobium luteolum (strain DSM 273 / BCRC 81028 / 2530) (Pelodictyon luteolum) protein is Probable transcriptional regulatory protein Plut_1643.